The following is a 131-amino-acid chain: MKIALIAHDKKKNDMVSFAYAYKPIFEQHELFATGTTGLRIMEATGLVITRYQSGPLGGDQEIGAMIAKNDLDMVIFFRDPLTAQPHEPDVNALLRLCDVYAIPLATNMASAEMLMHALERGDLDYRKLRK.

The MGS-like domain maps to M1 to K131. Substrate contacts are provided by residues H8, K12, T34–T37, and S54–G55. D60 functions as the Proton donor/acceptor in the catalytic mechanism. H87 is a substrate binding site.

The protein belongs to the methylglyoxal synthase family.

The enzyme catalyses dihydroxyacetone phosphate = methylglyoxal + phosphate. Functionally, catalyzes the formation of methylglyoxal from dihydroxyacetone phosphate. This is Methylglyoxal synthase from Bacillus cereus (strain ATCC 14579 / DSM 31 / CCUG 7414 / JCM 2152 / NBRC 15305 / NCIMB 9373 / NCTC 2599 / NRRL B-3711).